Reading from the N-terminus, the 75-residue chain is F1845 fimbrial adhesin operon regulatory protein DaaF (75 aa).

Functionally, may have a possible regulatory function on the expression of the other daa genes. The protein is F1845 fimbrial adhesin operon regulatory protein DaaF (daaF) of Escherichia coli.